The chain runs to 608 residues: Pentatricopeptide repeat-containing protein 1, apicoplast (608 aa).

PPR repeat units lie at residues 165–199, 200–230, 236–270, 336–370, 372–402, 410–445, and 446–480; these read TTLA…NIKP, DLVS…MIES, NYEI…PFVE, QYSE…GKYM, SIFV…LKND, NVNI…LLTP, and NNLS…KLLN.

It belongs to the PPR family. P subfamily. Homodimer.

The protein resides in the plastid. It is found in the apicoplast. Functionally, binds to apicoplast RNA transcripts, preferentially to the motif UUAU, and protects RNA transcripts from degradation by ribonuclease. The chain is Pentatricopeptide repeat-containing protein 1, apicoplast from Plasmodium falciparum (isolate 3D7).